Consider the following 1405-residue polypeptide: Centlein (1405 aa).

Pro residues predominate over residues 1-14 (MAARSPPSPHPSPP). A disordered region spans residues 1-79 (MAARSPPSPH…GGAAPAHAPL (79 aa)). At A2 the chain carries N-acetylalanine. Residues S5 and S22 each carry the phosphoserine modification. The segment covering 48–58 (VVADESDKIWV) has biased composition (basic and acidic residues). Residues 61 to 71 (EGSGGRRGPGG) are compositionally biased toward gly residues. Positions 95–126 (EEAMVTRTQLLEEELSSLKEELALCQADKEFV) form a coiled coil. Disordered stretches follow at residues 421-450 (KLKE…QVPH) and 493-529 (SRKS…EELQ). Coiled-coil stretches lie at residues 613 to 655 (NELA…ELNR) and 681 to 793 (KNGK…ELIN). A disordered region spans residues 865-917 (WEDVSESSSDSEAQTSQTLGTIIVETSQKISPTEDGKDQKESDPTEDSQTQGK). Positions 877-895 (AQTSQTLGTIIVETSQKIS) are enriched in polar residues. Basic and acidic residues predominate over residues 896–907 (PTEDGKDQKESD). Positions 980 to 1311 (NIILLRERII…IRELKKMKKN (332 aa)) form a coiled coil. T1343 is subject to Phosphothreonine.

Interacts with CEP250 and CEP68. Interacts with NEK2; the interaction leads to phosphorylation of CNTLN. Phosphorylated directly or indirectly by NEK2.

The protein resides in the cytoplasm. The protein localises to the cytoskeleton. It is found in the microtubule organizing center. It localises to the centrosome. Its subcellular location is the centriole. Required for centrosome cohesion and recruitment of CEP68 to centrosomes. The chain is Centlein (CNTLN) from Homo sapiens (Human).